Consider the following 1637-residue polypeptide: Acrosomal protein KIAA1210 (1637 aa).

Disordered stretches follow at residues 44 to 121 (RFSS…LSIS), 141 to 293 (RTTT…KNEW), 341 to 404 (PTTT…KKKD), 438 to 759 (VCGE…SQSE), 865 to 896 (PKLP…EGST), 935 to 975 (SKYS…FQPL), 1017 to 1057 (LQPW…IPSQ), 1090 to 1137 (FPFQ…SRRA), 1182 to 1238 (SQTI…SKSF), and 1539 to 1558 (NKGD…PAFS). The segment covering 103–114 (HRSKSLKIKSQR) has biased composition (basic residues). A compositionally biased stretch (low complexity) spans 141 to 156 (RTTTTFRRRSSQCSST). Polar residues predominate over residues 170–190 (SESSTQQFSGFSTPATSQGCL). Positions 229–249 (AKEKTTTKTKEAEQGEQKVDS) are enriched in basic and acidic residues. Positions 250–261 (TELSSQEQSSKT) are enriched in low complexity. Residues 341–353 (PTTTEAEVTTVQK) show a composition bias toward polar residues. Residues 355-374 (PSDKGDVERELADIDVEAQK) are compositionally biased toward basic and acidic residues. The segment covering 508–526 (TGETSSDSKSTSEYESSSE) has biased composition (low complexity). Residues 550–572 (ADDEEDGDDEKEEKDNDDDDEEN) show a composition bias toward acidic residues. The span at 689–698 (DLSSSEQEQQ) shows a compositional bias: low complexity. 5 stretches are compositionally biased toward polar residues: residues 745 to 759 (SPTQ…SQSE), 879 to 896 (GKQS…EGST), 935 to 956 (SKYS…STSA), 964 to 975 (SQPSVTPKFQPL), and 1017 to 1030 (LQPW…QVSV).

In terms of assembly, interacts with TOP2B. As to expression, predominantly expressed in testis (at protein level).

The protein localises to the cytoplasmic vesicle. It localises to the secretory vesicle. The protein resides in the acrosome. The polypeptide is Acrosomal protein KIAA1210 (Mus musculus (Mouse)).